A 402-amino-acid polypeptide reads, in one-letter code: Propionate kinase (402 aa).

The ATP site is built by Asn-11 and Lys-18. Mg(2+) is bound at residue Asn-11. A substrate-binding site is contributed by Arg-86. Catalysis depends on Asp-143, which acts as the Proton donor/acceptor. Residues His-175, 203-207, 278-280, and 326-330 each bind ATP; these read HLGNG, DLR, and GIGEN.

Belongs to the acetokinase family. TdcD subfamily. Homodimer. It depends on Mg(2+) as a cofactor.

It catalyses the reaction propanoate + ATP = propanoyl phosphate + ADP. The protein operates within amino-acid degradation; L-threonine degradation via propanoate pathway; propanoate from L-threonine: step 4/4. In terms of biological role, catalyzes the conversion of propionyl phosphate and ADP to propionate and ATP. In Citrobacter koseri (strain ATCC BAA-895 / CDC 4225-83 / SGSC4696), this protein is Propionate kinase.